A 311-amino-acid polypeptide reads, in one-letter code: tRNA dimethylallyltransferase (311 aa).

Gly-10–Thr-17 is a binding site for ATP. Thr-12–Thr-17 serves as a coordination point for substrate. 3 interaction with substrate tRNA regions span residues Asp-35 to Leu-38, Gln-159 to Arg-163, and Arg-240 to Arg-245.

Belongs to the IPP transferase family. In terms of assembly, monomer. Mg(2+) serves as cofactor.

The catalysed reaction is adenosine(37) in tRNA + dimethylallyl diphosphate = N(6)-dimethylallyladenosine(37) in tRNA + diphosphate. Catalyzes the transfer of a dimethylallyl group onto the adenine at position 37 in tRNAs that read codons beginning with uridine, leading to the formation of N6-(dimethylallyl)adenosine (i(6)A). This is tRNA dimethylallyltransferase from Haemophilus influenzae (strain 86-028NP).